Here is a 610-residue protein sequence, read N- to C-terminus: Elongation factor 4 (610 aa).

The 183-residue stretch at 11-193 (ENIRNFSIIA…QIVEKVPAPS (183 aa)) folds into the tr-type G domain. GTP is bound by residues 23 to 28 (DHGKST) and 140 to 143 (NKID).

The protein belongs to the TRAFAC class translation factor GTPase superfamily. Classic translation factor GTPase family. LepA subfamily.

It is found in the cell membrane. It carries out the reaction GTP + H2O = GDP + phosphate + H(+). Its function is as follows. Required for accurate and efficient protein synthesis under certain stress conditions. May act as a fidelity factor of the translation reaction, by catalyzing a one-codon backward translocation of tRNAs on improperly translocated ribosomes. Back-translocation proceeds from a post-translocation (POST) complex to a pre-translocation (PRE) complex, thus giving elongation factor G a second chance to translocate the tRNAs correctly. Binds to ribosomes in a GTP-dependent manner. The sequence is that of Elongation factor 4 from Streptococcus equi subsp. equi (strain 4047).